A 45-amino-acid polypeptide reads, in one-letter code: Phospholipase A2 3 (45 aa).

Positions 20, 24, and 25 each coordinate Ca(2+). The cysteines at positions 21 and 36 are disulfide-linked. The active site involves His-39. A Ca(2+)-binding site is contributed by Asp-40.

The cofactor is Ca(2+). Expressed by the venom gland.

It is found in the secreted. The catalysed reaction is a 1,2-diacyl-sn-glycero-3-phosphocholine + H2O = a 1-acyl-sn-glycero-3-phosphocholine + a fatty acid + H(+). In terms of biological role, PLA2 catalyzes the calcium-dependent hydrolysis of the 2-acyl groups in 3-sn-phosphoglycerides. This is Phospholipase A2 3 from Bothrops diporus (Chaco lancehead).